Here is a 318-residue protein sequence, read N- to C-terminus: Phosphatidylglycerol--prolipoprotein diacylglyceryl transferase (318 aa).

Transmembrane regions (helical) follow at residues 23–43, 59–79, 98–118, 124–146, 192–212, 219–239, and 253–273; these read PLTIRFYALCILAGIVIGAWL, MDIIMWAVPFGIVGGRLYHVI, IWEGGLGIWGAVAVGLAGAAI, GVRLATFADAAAPGLLLAQAMGR, FQPTFLYESLWCLAAAALLVF, LGAGSVFALYVVLYTAGRFIF, and LRVNTWVSALLFLAALAVFLI. Residue arginine 146 coordinates a 1,2-diacyl-sn-glycero-3-phospho-(1'-sn-glycerol). The segment covering 293-312 has biased composition (basic and acidic residues); the sequence is FDTRANGHDPEKHDETDGKG. The interval 293–318 is disordered; the sequence is FDTRANGHDPEKHDETDGKGNRHHVP.

This sequence belongs to the Lgt family.

The protein resides in the cell membrane. The enzyme catalyses L-cysteinyl-[prolipoprotein] + a 1,2-diacyl-sn-glycero-3-phospho-(1'-sn-glycerol) = an S-1,2-diacyl-sn-glyceryl-L-cysteinyl-[prolipoprotein] + sn-glycerol 1-phosphate + H(+). The protein operates within protein modification; lipoprotein biosynthesis (diacylglyceryl transfer). Functionally, catalyzes the transfer of the diacylglyceryl group from phosphatidylglycerol to the sulfhydryl group of the N-terminal cysteine of a prolipoprotein, the first step in the formation of mature lipoproteins. This chain is Phosphatidylglycerol--prolipoprotein diacylglyceryl transferase, found in Paenarthrobacter aurescens (strain TC1).